Reading from the N-terminus, the 37-residue chain is Omega-conotoxin-like S6.7 (37 aa).

Positions 1–4 (KSTS) are excised as a propeptide. Intrachain disulfides connect Cys-5-Cys-20, Cys-12-Cys-23, and Cys-19-Cys-32.

This sequence belongs to the conotoxin O1 superfamily. In terms of tissue distribution, expressed by the venom duct.

The protein localises to the secreted. In terms of biological role, omega-conotoxins act at presynaptic membranes, they bind and block voltage-gated calcium channels (Cav). This toxin blocks N-, P- and Q-type calcium channels. The polypeptide is Omega-conotoxin-like S6.7 (Conus striatus (Striated cone)).